The following is a 207-amino-acid chain: Ribonuclease HII (207 aa).

The region spanning 20-207 (QLFAGVDEVG…KPVKRVLGIE (188 aa)) is the RNase H type-2 domain. Residues aspartate 26, glutamate 27, and aspartate 118 each coordinate a divalent metal cation.

It belongs to the RNase HII family. Mn(2+) serves as cofactor. The cofactor is Mg(2+).

The protein resides in the cytoplasm. The catalysed reaction is Endonucleolytic cleavage to 5'-phosphomonoester.. In terms of biological role, endonuclease that specifically degrades the RNA of RNA-DNA hybrids. This Aliivibrio salmonicida (strain LFI1238) (Vibrio salmonicida (strain LFI1238)) protein is Ribonuclease HII.